Reading from the N-terminus, the 319-residue chain is Beta-ketoacyl-[acyl-carrier-protein] synthase III (319 aa).

Catalysis depends on residues Cys-115 and His-246. The tract at residues 247–251 is ACP-binding; the sequence is QANLR. Asn-276 is a catalytic residue.

It belongs to the thiolase-like superfamily. FabH family. Homodimer.

The protein localises to the cytoplasm. It carries out the reaction malonyl-[ACP] + acetyl-CoA + H(+) = 3-oxobutanoyl-[ACP] + CO2 + CoA. The protein operates within lipid metabolism; fatty acid biosynthesis. Functionally, catalyzes the condensation reaction of fatty acid synthesis by the addition to an acyl acceptor of two carbons from malonyl-ACP. Catalyzes the first condensation reaction which initiates fatty acid synthesis and may therefore play a role in governing the total rate of fatty acid production. Possesses both acetoacetyl-ACP synthase and acetyl transacylase activities. Its substrate specificity determines the biosynthesis of branched-chain and/or straight-chain of fatty acids. The chain is Beta-ketoacyl-[acyl-carrier-protein] synthase III from Coxiella burnetii (strain CbuK_Q154) (Coxiella burnetii (strain Q154)).